The primary structure comprises 1226 residues: DNA-directed RNA polymerase subunit beta (1226 aa).

It belongs to the RNA polymerase beta chain family. The RNAP catalytic core consists of 2 alpha, 1 beta, 1 beta' and 1 omega subunit. When a sigma factor is associated with the core the holoenzyme is formed, which can initiate transcription.

The enzyme catalyses RNA(n) + a ribonucleoside 5'-triphosphate = RNA(n+1) + diphosphate. Its function is as follows. DNA-dependent RNA polymerase catalyzes the transcription of DNA into RNA using the four ribonucleoside triphosphates as substrates. The polypeptide is DNA-directed RNA polymerase subunit beta (Leptospira interrogans serogroup Icterohaemorrhagiae serovar copenhageni (strain Fiocruz L1-130)).